A 1029-amino-acid polypeptide reads, in one-letter code: DNA repair protein RAD5A (1029 aa).

The segment at 83 to 104 (SVGANHRVEEENESVNGGGEES) is disordered. The region spanning 406 to 622 (PSTLQMARGG…YSLLRFLRIE (217 aa)) is the Helicase ATP-binding domain. ATP is bound at residue 419–426 (DAMGLGKT). The short motif at 573–576 (DEAH) is the DEAH box element. Residues 794 to 834 (CPICLEALEDAVLTPCAHRLCRECLLASWRNSTSGLCPVCR) form an RING-type zinc finger. Positions 864-1029 (KITALLEELE…RIEELKMLFT (166 aa)) constitute a Helicase C-terminal domain.

The protein belongs to the SNF2/RAD54 helicase family. RAD16 subfamily.

Its subcellular location is the nucleus. In terms of biological role, functions in error-free postreplication DNA repair or DNA-damage tolerance (DTT) pathway. Required for homologous recombination (HR) induced by DNA double-strand break (DSB) in somatic cells. Required for damage-induced DNA repair, independently of MUS81 and RECQL4A. Plays a role in synthesis-dependent strand annealing (SDSA) but not in single-strand annealing (SSA). Possesses double-stranded DNA-dependent ATPase activity. Is able to regress replication forks with preference for forks with a leading strand gap. Is able to catalyze branch migration of Holliday junctions and is unaffected by protein blockades. In Arabidopsis thaliana (Mouse-ear cress), this protein is DNA repair protein RAD5A.